Here is a 432-residue protein sequence, read N- to C-terminus: Homogentisate 1,2-dioxygenase (432 aa).

Residue H287 is the Proton acceptor of the active site. Fe cation contacts are provided by H330 and E336. 2 residues coordinate homogentisate: Y345 and H366. Position 366 (H366) interacts with Fe cation.

This sequence belongs to the homogentisate dioxygenase family. In terms of assembly, hexamer; dimer of trimers. Fe cation is required as a cofactor.

The catalysed reaction is homogentisate + O2 = 4-maleylacetoacetate + H(+). Its pathway is amino-acid degradation; L-phenylalanine degradation; acetoacetate and fumarate from L-phenylalanine: step 4/6. In terms of biological role, involved in the catabolism of homogentisate (2,5-dihydroxyphenylacetate or 2,5-OH-PhAc), a central intermediate in the degradation of phenylalanine and tyrosine. Catalyzes the oxidative ring cleavage of the aromatic ring of homogentisate to yield maleylacetoacetate. The protein is Homogentisate 1,2-dioxygenase of Pseudomonas aeruginosa (strain UCBPP-PA14).